A 35-amino-acid polypeptide reads, in one-letter code: Sperm protamine alpha isoform 1 (35 aa).

The interval 1–35 (MPRRRRRASRPVRRRRRARRSTAVRRRRRVVRRRR) is disordered. Phosphoserine occurs at positions 9 and 21.

Post-translationally, phosphorylated in immature sperm. Dephosphorylated in mature sperm allowing a stronger interaction with DNA. Gonads.

Its subcellular location is the nucleus. The protein resides in the chromosome. Protamines substitute for histones in the chromatin of sperm during the haploid phase of spermatogenesis. They compact sperm DNA into a highly condensed, stable and inactive complex. This chain is Sperm protamine alpha isoform 1, found in Scomber scombrus (Atlantic mackerel).